We begin with the raw amino-acid sequence, 452 residues long: Putative zinc metalloprotease VC_2253 (452 aa).

His-22 is a Zn(2+) binding site. The active site involves Glu-23. His-26 is a binding site for Zn(2+). Residues 98-120 (SAIVSAGPIFNFLFAIFAYWLVF) traverse the membrane as a helical segment. The 96-residue stretch at 197–292 (NLRDWNFDPE…QVELTLIPDS (96 aa)) folds into the PDZ domain. 2 consecutive transmembrane segments (helical) span residues 378-400 (FVYF…LVPL) and 428-447 (MGYR…AIFN).

It belongs to the peptidase M50B family. The cofactor is Zn(2+).

The protein resides in the cell inner membrane. This Vibrio cholerae serotype O1 (strain ATCC 39315 / El Tor Inaba N16961) protein is Putative zinc metalloprotease VC_2253.